Here is a 144-residue protein sequence, read N- to C-terminus: UPF0102 protein BURPS1106A_3900 (144 aa).

Residues 1–28 (MCHAREASPGTGEPEAAPRDNFPRAAGS) form a disordered region.

This sequence belongs to the UPF0102 family.

The protein is UPF0102 protein BURPS1106A_3900 of Burkholderia pseudomallei (strain 1106a).